A 130-amino-acid polypeptide reads, in one-letter code: Large ribosomal subunit protein bL19 (130 aa).

It belongs to the bacterial ribosomal protein bL19 family.

Functionally, this protein is located at the 30S-50S ribosomal subunit interface and may play a role in the structure and function of the aminoacyl-tRNA binding site. This chain is Large ribosomal subunit protein bL19, found in Methylorubrum populi (strain ATCC BAA-705 / NCIMB 13946 / BJ001) (Methylobacterium populi).